The sequence spans 137 residues: Holo-[acyl-carrier-protein] synthase (137 aa).

Mg(2+) contacts are provided by Asp-8 and Glu-57.

It belongs to the P-Pant transferase superfamily. AcpS family. Mg(2+) serves as cofactor.

It is found in the cytoplasm. The enzyme catalyses apo-[ACP] + CoA = holo-[ACP] + adenosine 3',5'-bisphosphate + H(+). Functionally, transfers the 4'-phosphopantetheine moiety from coenzyme A to a Ser of acyl-carrier-protein. The protein is Holo-[acyl-carrier-protein] synthase of Cereibacter sphaeroides (strain ATCC 17029 / ATH 2.4.9) (Rhodobacter sphaeroides).